The following is a 317-amino-acid chain: Acetyl-coenzyme A carboxylase carboxyl transferase subunit alpha (317 aa).

Residues 40–293 (LEVRVREAIV…GDVIANALGE (254 aa)) enclose the CoA carboxyltransferase C-terminal domain.

It belongs to the AccA family. In terms of assembly, acetyl-CoA carboxylase is a heterohexamer composed of biotin carboxyl carrier protein (AccB), biotin carboxylase (AccC) and two subunits each of ACCase subunit alpha (AccA) and ACCase subunit beta (AccD).

It is found in the cytoplasm. It carries out the reaction N(6)-carboxybiotinyl-L-lysyl-[protein] + acetyl-CoA = N(6)-biotinyl-L-lysyl-[protein] + malonyl-CoA. The protein operates within lipid metabolism; malonyl-CoA biosynthesis; malonyl-CoA from acetyl-CoA: step 1/1. Its function is as follows. Component of the acetyl coenzyme A carboxylase (ACC) complex. First, biotin carboxylase catalyzes the carboxylation of biotin on its carrier protein (BCCP) and then the CO(2) group is transferred by the carboxyltransferase to acetyl-CoA to form malonyl-CoA. In Rhizobium leguminosarum bv. trifolii (strain WSM2304), this protein is Acetyl-coenzyme A carboxylase carboxyl transferase subunit alpha.